We begin with the raw amino-acid sequence, 232 residues long: Small ribosomal subunit protein uS3 (232 aa).

Residues 39 to 107 form the KH type-2 domain; that stretch reads VRQYLTKELK…PAQINIAEVR (69 aa).

This sequence belongs to the universal ribosomal protein uS3 family. Part of the 30S ribosomal subunit. Forms a tight complex with proteins S10 and S14.

Binds the lower part of the 30S subunit head. Binds mRNA in the 70S ribosome, positioning it for translation. This is Small ribosomal subunit protein uS3 from Aliivibrio salmonicida (strain LFI1238) (Vibrio salmonicida (strain LFI1238)).